A 138-amino-acid chain; its full sequence is MLQPKRRKYRKEQKGRNTGKATRGNAVSFGEFGLKAIGRGRLTARQIEAARRAMTRHIKRGGRIWIRIFPDKPISQKPAEVRMGNGKGNPEYYVAEIQPGKMLYEMDGVSEELAREAFRLAAAKLPIQTTFIVRQLGA.

Over residues 1–13 the composition is skewed to basic residues; it reads MLQPKRRKYRKEQ. Positions 1 to 24 are disordered; sequence MLQPKRRKYRKEQKGRNTGKATRG.

Belongs to the universal ribosomal protein uL16 family. In terms of assembly, part of the 50S ribosomal subunit.

Binds 23S rRNA and is also seen to make contacts with the A and possibly P site tRNAs. This Burkholderia multivorans (strain ATCC 17616 / 249) protein is Large ribosomal subunit protein uL16.